The primary structure comprises 253 residues: 3-deoxy-manno-octulosonate cytidylyltransferase (253 aa).

This sequence belongs to the KdsB family.

It is found in the cytoplasm. The enzyme catalyses 3-deoxy-alpha-D-manno-oct-2-ulosonate + CTP = CMP-3-deoxy-beta-D-manno-octulosonate + diphosphate. The protein operates within nucleotide-sugar biosynthesis; CMP-3-deoxy-D-manno-octulosonate biosynthesis; CMP-3-deoxy-D-manno-octulosonate from 3-deoxy-D-manno-octulosonate and CTP: step 1/1. Its pathway is bacterial outer membrane biogenesis; lipopolysaccharide biosynthesis. Activates KDO (a required 8-carbon sugar) for incorporation into bacterial lipopolysaccharide in Gram-negative bacteria. This Neisseria meningitidis serogroup C / serotype 2a (strain ATCC 700532 / DSM 15464 / FAM18) protein is 3-deoxy-manno-octulosonate cytidylyltransferase.